Reading from the N-terminus, the 312-residue chain is Glyoxylate/hydroxypyruvate reductase A (312 aa).

Arg227 is a catalytic residue. His275 (proton donor) is an active-site residue.

This sequence belongs to the D-isomer specific 2-hydroxyacid dehydrogenase family. GhrA subfamily.

The protein resides in the cytoplasm. It catalyses the reaction glycolate + NADP(+) = glyoxylate + NADPH + H(+). The enzyme catalyses (R)-glycerate + NAD(+) = 3-hydroxypyruvate + NADH + H(+). It carries out the reaction (R)-glycerate + NADP(+) = 3-hydroxypyruvate + NADPH + H(+). Catalyzes the NADPH-dependent reduction of glyoxylate and hydroxypyruvate into glycolate and glycerate, respectively. The protein is Glyoxylate/hydroxypyruvate reductase A of Escherichia coli (strain ATCC 8739 / DSM 1576 / NBRC 3972 / NCIMB 8545 / WDCM 00012 / Crooks).